The sequence spans 60 residues: Cytotoxin 4 (60 aa).

4 disulfide bridges follow: C3–C21, C14–C38, C42–C53, and C54–C59.

The protein belongs to the three-finger toxin family. Short-chain subfamily. Type IA cytotoxin sub-subfamily. Monomer in solution; Homodimer and oligomer in the presence of negatively charged lipids forming a pore with a size ranging between 20 and 30 Angstroms. In terms of tissue distribution, expressed by the venom gland.

The protein localises to the secreted. It localises to the target cell membrane. Functionally, shows cytolytic activity on many different cells by forming pore in lipid membranes. In vivo, increases heart rate or kills the animal by cardiac arrest. In addition, it binds to heparin with high affinity, interacts with Kv channel-interacting protein 1 (KCNIP1) in a calcium-independent manner, and binds to integrin alpha-V/beta-3 (ITGAV/ITGB3) with moderate affinity. The polypeptide is Cytotoxin 4 (Naja mossambica (Mozambique spitting cobra)).